A 765-amino-acid chain; its full sequence is Carboxysome assembly protein CsoS2 (765 aa).

A compositionally biased stretch (basic and acidic residues) spans Met1–Lys22. Disordered regions lie at residues Met1–Val107 and Arg165–Gly229. The tract at residues Met1–Gln215 is N-terminal domain. One copy of the N-repeat 1 repeat lies at Arg7 to Lys22. Over residues Ser38–Pro63 the composition is skewed to polar residues. Residues Ser77–Lys87 are compositionally biased toward basic and acidic residues. N-repeat repeat units follow at residues Lys79 to Lys94, Arg158 to Lys173, and Arg196 to Ser211. The span at Arg187–Ser207 shows a compositional bias: basic and acidic residues. The middle region stretch occupies residues Gly216 to Asp586. M-repeat repeat units lie at residues Lys240–Cys289, Arg300–Cys349, Lys358–Tyr397, Lys411–Cys460, Lys470–Cys519, and Arg530–Cys580. Disordered stretches follow at residues Thr306 to Pro328 and Gly367 to Gly413. Residues Tyr589–Asn734 form a C-terminal domain region. 2 C-repeat repeats span residues Ser604–Gln648 and Lys677–Ser711. Disordered stretches follow at residues Glu611–Asp637 and Asn656–Gly765. Basic and acidic residues predominate over residues Asp730 to Asp741. Positions Asp735 to Gly765 are C-terminal peptide.

The protein belongs to the CsoS2 family. In terms of assembly, probably interacts with the carboxysome major shell protein CsoS1 via the N-terminal domain. A CsoS1-CsoS1D-CsoS2 complex can be isolated following expression in E.coli. Interacts via its N-terminal repeats with RuBisCO. In terms of processing, unlike H.neapolitanus and predictions for P.marinus strain MIT 9313, this protein is not thought to have ribosomal frameshifting.

Its subcellular location is the carboxysome. Functionally, required for alpha-carboxysome (Cb) assembly, mediates interaction between RuBisCO and the Cb shell. The protein is probably highly flexible. The C-terminal repeats act as the encapsulation signal to target proteins to the Cb; they are necessary and sufficient to target both CsoS2 and foreign proteins to the Cb. The N-terminal repeats of this protein bind simultaneously to both subunits of RuBisCO. Probably also interacts with the major shell proteins (CsoS1); that interaction would increase the local concentration of CsoS2 so that it can condense RuBisCO and full carboxysomes can be formed. There are estimated to be 163 CsoS2 proteins per carboxysome; unlike H.neapolitanus only 1 form is seen. The sequence is that of Carboxysome assembly protein CsoS2 from Prochlorococcus marinus subsp. pastoris (strain CCMP1986 / NIES-2087 / MED4).